A 104-amino-acid polypeptide reads, in one-letter code: DNA-directed RNA polymerase subunit Rpo13 (104 aa).

Disordered stretches follow at residues 1 to 33 and 78 to 104; these read MVSGMSTDEEKEGTSDEEVNEEKEVEETSEDEF and RDSRRKAKKAVSKKVKKTKKKEKSVEG. Positions 7 to 31 are enriched in acidic residues; that stretch reads TDEEKEGTSDEEVNEEKEVEETSED. Residues 80 to 104 show a composition bias toward basic residues; that stretch reads SRRKAKKAVSKKVKKTKKKEKSVEG.

Belongs to the archaeal Rpo13 RNA polymerase subunit family. Part of the 13-subunit RNA polymerase complex.

Its subcellular location is the cytoplasm. The enzyme catalyses RNA(n) + a ribonucleoside 5'-triphosphate = RNA(n+1) + diphosphate. Its function is as follows. DNA-dependent RNA polymerase (RNAP) catalyzes the transcription of DNA into RNA using the four ribonucleoside triphosphates as substrates. Probably binds dsDNA. The chain is DNA-directed RNA polymerase subunit Rpo13 from Saccharolobus solfataricus (strain ATCC 35092 / DSM 1617 / JCM 11322 / P2) (Sulfolobus solfataricus).